The sequence spans 436 residues: Histidinol dehydrogenase (436 aa).

NAD(+)-binding residues include Y136, Q198, and N221. Positions 244, 266, and 269 each coordinate substrate. Residues Q266 and H269 each contribute to the Zn(2+) site. Residues E334 and H335 each act as proton acceptor in the active site. Substrate is bound by residues H335, D368, E422, and H427. A Zn(2+)-binding site is contributed by D368. H427 is a Zn(2+) binding site.

It belongs to the histidinol dehydrogenase family. The cofactor is Zn(2+).

It catalyses the reaction L-histidinol + 2 NAD(+) + H2O = L-histidine + 2 NADH + 3 H(+). It functions in the pathway amino-acid biosynthesis; L-histidine biosynthesis; L-histidine from 5-phospho-alpha-D-ribose 1-diphosphate: step 9/9. Catalyzes the sequential NAD-dependent oxidations of L-histidinol to L-histidinaldehyde and then to L-histidine. The polypeptide is Histidinol dehydrogenase (Dehalococcoides mccartyi (strain CBDB1)).